Here is a 271-residue protein sequence, read N- to C-terminus: Orotidine 5'-phosphate decarboxylase (271 aa).

Lys-95 acts as the Proton donor in catalysis.

It belongs to the OMP decarboxylase family. Type 2 subfamily.

The enzyme catalyses orotidine 5'-phosphate + H(+) = UMP + CO2. It functions in the pathway pyrimidine metabolism; UMP biosynthesis via de novo pathway; UMP from orotate: step 2/2. In Janthinobacterium sp. (strain Marseille) (Minibacterium massiliensis), this protein is Orotidine 5'-phosphate decarboxylase.